Here is a 340-residue protein sequence, read N- to C-terminus: Biotin synthase (340 aa).

In terms of domain architecture, Radical SAM core spans 56–283 (NAVQLSTLLS…KAVVRLSAGR (228 aa)). [4Fe-4S] cluster is bound by residues Cys-71, Cys-75, and Cys-78. Residues Cys-115, Cys-146, Cys-206, and Arg-278 each coordinate [2Fe-2S] cluster.

The protein belongs to the radical SAM superfamily. Biotin synthase family. As to quaternary structure, homodimer. [4Fe-4S] cluster serves as cofactor. [2Fe-2S] cluster is required as a cofactor.

The enzyme catalyses (4R,5S)-dethiobiotin + (sulfur carrier)-SH + 2 reduced [2Fe-2S]-[ferredoxin] + 2 S-adenosyl-L-methionine = (sulfur carrier)-H + biotin + 2 5'-deoxyadenosine + 2 L-methionine + 2 oxidized [2Fe-2S]-[ferredoxin]. It functions in the pathway cofactor biosynthesis; biotin biosynthesis; biotin from 7,8-diaminononanoate: step 2/2. Its function is as follows. Catalyzes the conversion of dethiobiotin (DTB) to biotin by the insertion of a sulfur atom into dethiobiotin via a radical-based mechanism. The protein is Biotin synthase of Burkholderia lata (strain ATCC 17760 / DSM 23089 / LMG 22485 / NCIMB 9086 / R18194 / 383).